The primary structure comprises 154 residues: Interleukin-2 (154 aa).

Positions 1–20 (MCKMQLLSCIALSLVLVANS) are cleaved as a signal peptide. O-linked (GalNAc...) threonine glycosylation occurs at Thr23. Residues Cys78 and Cys126 are joined by a disulfide bond.

Belongs to the IL-2 family.

It localises to the secreted. Its function is as follows. Cytokine produced by activated CD4-positive helper T-cells and to a lesser extend activated CD8-positive T-cells and natural killer (NK) cells that plays pivotal roles in the immune response and tolerance. Binds to a receptor complex composed of either the high-affinity trimeric IL-2R (IL2RA/CD25, IL2RB/CD122 and IL2RG/CD132) or the low-affinity dimeric IL-2R (IL2RB and IL2RG). Interaction with the receptor leads to oligomerization and conformation changes in the IL-2R subunits resulting in downstream signaling starting with phosphorylation of JAK1 and JAK3. In turn, JAK1 and JAK3 phosphorylate the receptor to form a docking site leading to the phosphorylation of several substrates including STAT5. This process leads to activation of several pathways including STAT, phosphoinositide-3-kinase/PI3K and mitogen-activated protein kinase/MAPK pathways. Functions as a T-cell growth factor and can increase NK-cell cytolytic activity as well. Promotes strong proliferation of activated B-cells and subsequently immunoglobulin production. Plays a pivotal role in regulating the adaptive immune system by controlling the survival and proliferation of regulatory T-cells, which are required for the maintenance of immune tolerance. Moreover, participates in the differentiation and homeostasis of effector T-cell subsets, including Th1, Th2, Th17 as well as memory CD8-positive T-cells. This is Interleukin-2 (IL2) from Mirounga angustirostris (Northern elephant seal).